The following is a 1239-amino-acid chain: Structural polyprotein (1239 aa).

Residues 15-95 (RPAPVQRYIP…KKKSKPGKRM (81 aa)) are disordered. Positions 36–62 (RGPSQLQQLVAALGALALQPKQKQKRA) are host transcription inhibition. A compositionally biased stretch (low complexity) spans 38–56 (PSQLQQLVAALGALALQPK). A Nuclear localization signal motif is present at residues 55–91 (PKQKQKRAQKKPKKTPPPKPKKTQKPKKPTQKKKSKP). The span at 57–95 (QKQKRAQKKPKKTPPPKPKKTQKPKKPTQKKKSKPGKRM) shows a compositional bias: basic residues. Residues 78 to 106 (QKPKKPTQKKKSKPGKRMRNCMKIENDCI) are binding to the viral RNA. The ribosome-binding stretch occupies residues 91 to 105 (PGKRMRNCMKIENDC). Cys105 and Cys120 are joined by a disulfide. The Peptidase S3 domain maps to 105–253 (CIFPVMLDGK…RITPEESVEW (149 aa)). The Charge relay system role is filled by His131. A Nuclear export signal motif is present at residues 136–146 (IDNPELAKLTF). Positions 147–152 (KKSSKY) are interaction with spike glycoprotein E2. Residue Asp153 is the Charge relay system of the active site. The segment at 175–185 (PEGHYNWHHGA) is dimerization of the capsid protein. The Charge relay system role is filled by Ser205. The dimerization of the capsid protein stretch occupies residues 211–215 (DNTGK). Residues 254-269 (SAAALNITALCVLQNL) are functions as an uncleaved signal peptide for the precursor of protein E3/E2. Cystine bridges form between Cys264–Cys273, Cys278–Cys282, Cys281–Cys313, Cys339–Cys443, Cys342–Cys348, Cys411–Cys425, Cys471–Cys585, Cys519–Cys545, and Cys521–Cys539. A glycan (N-linked (GlcNAc...) asparagine; by host) is linked at Asn268. Residues 322–686 (SVAHFEAYKA…HYYDLYPYWT (365 aa)) lie on the Extracellular side of the membrane. A helical transmembrane segment spans residues 687–707 (ITVLASLGLLIVISSGFSCFL). S-palmitoyl cysteine; by host attachment occurs at residues Cys705 and Cys708. Residues 708-751 (CSVARTKCLTPYQLAPGAQLPTFIALLCCAKSARADTLDDFSYL) are Cytoplasmic-facing. The tract at residues 710–714 (VARTK) is interaction with the capsid protein. Residues Cys715, Cys735, and Cys736 are each lipidated (S-palmitoyl cysteine; by host). Cysteines 715 and 736 form a disulfide. The Extracellular portion of the chain corresponds to 752 to 756 (WTNNQ). Residues 757-777 (AMFWLQLASPVAAFLCLSYCC) traverse the membrane as a helical segment. Residues 778 to 779 (RN) are Cytoplasmic-facing. Residues 780–800 (LACCMKIFLGISGLCVIATQA) form a helical membrane-spanning segment. Topologically, residues 801 to 1216 (YEHSTTMPNQ…WQWLAHTTSG (416 aa)) are extracellular. 4 disulfides stabilise this stretch: Cys849/Cys914, Cys862/Cys894, Cys863/Cys896, and Cys868/Cys878. The E1 fusion peptide loop stretch occupies residues 884-901 (VYPFMWGGAYCFCDTENS). 3 N-linked (GlcNAc...) asparagine; by host glycosylation sites follow: Asn941, Asn1009, and Asn1070. Intrachain disulfides connect Cys1059–Cys1071, Cys1101–Cys1176, Cys1106–Cys1180, and Cys1128–Cys1170. The helical transmembrane segment at 1217 to 1237 (PLTILVVAIIVVVVVSIVVCA) threads the bilayer. Cys1236 carries the S-palmitoyl cysteine; by host lipid modification. Residues 1238 to 1239 (RH) lie on the Cytoplasmic side of the membrane.

In terms of assembly, homodimer. Homomultimer. Interacts with host karyopherin KPNA4; this interaction allows the nuclear import of the viral capsid protein. Interacts with spike glycoprotein E2. Interacts with host IRAK1; the interaction leads to inhibition of IRAK1-dependent signaling. As to quaternary structure, the precursor of protein E3/E2 and E1 form a heterodimer shortly after synthesis. Interacts with spike glycoprotein E1. The precursor of protein E3/E2 and E1 form a heterodimer shortly after synthesis. Processing of the precursor of protein E3/E2 into E2 and E3 results in a heterodimer of the spike glycoproteins E2 and E1. Spike at virion surface are constituted of a trimer of E2-E1 heterodimers. After target cell attachment and endocytosis, E1 change conformation to form homotrimers. Interacts with 6K protein. In terms of assembly, interacts with spike glycoprotein E1. Processing of the precursor of protein E3/E2 into E2 and E3 results in a heterodimer of the spike glycoproteins E2 and E1. Spike at virion surface are constituted of a trimer of E2-E1 heterodimers. Interacts with 6K protein. Interacts with host MXRA8; this interaction mediates virus entry. Interacts with the capsid protein. As to quaternary structure, oligomer. Interacts with spike glycoprotein E1. Interacts with spike glycoprotein E2. Structural polyprotein: Specific enzymatic cleavages in vivo yield mature proteins. Capsid protein is auto-cleaved during polyprotein translation, unmasking a signal peptide at the N-terminus of the precursor of E3/E2. The remaining polyprotein is then targeted to the host endoplasmic reticulum, where host signal peptidase cleaves it into pE2, 6K and E1 proteins. pE2 is further processed to mature E3 and E2 by host furin in trans-Golgi vesicle. Post-translationally, palmitoylated via thioester bonds. These palmitoylations may induce disruption of the C-terminus transmembrane. This would result in the reorientation of E2 C-terminus from lumenal to cytoplasmic side. In terms of processing, N-glycosylated. Palmitoylated via thioester bonds.

The protein localises to the virion. The protein resides in the host cytoplasm. Its subcellular location is the host cell membrane. It localises to the host nucleus. It is found in the virion membrane. The protein localises to the host Golgi apparatus. The protein resides in the host trans-Golgi network. Its subcellular location is the host endoplasmic reticulum. It catalyses the reaction Autocatalytic release of the core protein from the N-terminus of the togavirus structural polyprotein by hydrolysis of a -Trp-|-Ser- bond.. In terms of biological role, forms an icosahedral capsid with a T=4 symmetry composed of 240 copies of the capsid protein surrounded by a lipid membrane through which penetrate 80 spikes composed of trimers of E1-E2 heterodimers. The capsid protein binds to the viral RNA genome at a site adjacent to a ribosome binding site for viral genome translation following genome release. Possesses a protease activity that results in its autocatalytic cleavage from the nascent structural protein. Following its self-cleavage, the capsid protein transiently associates with ribosomes, and within several minutes the protein binds to viral RNA and rapidly assembles into icosahedric core particles. The resulting nucleocapsid eventually associates with the cytoplasmic domain of the spike glycoprotein E2 at the cell membrane, leading to budding and formation of mature virions. In case of infection, new virions attach to target cells and after clathrin-mediated endocytosis their membrane fuses with the host endosomal membrane. This leads to the release of the nucleocapsid into the cytoplasm, followed by an uncoating event necessary for the genomic RNA to become accessible. The uncoating might be triggered by the interaction of capsid proteins with ribosomes. Binding of ribosomes would release the genomic RNA since the same region is genomic RNA-binding and ribosome-binding. Specifically inhibits interleukin-1 receptor-associated kinase 1/IRAK1-dependent signaling during viral entry, representing a means by which the alphaviruses may evade innate immune detection and activation prior to viral gene expression. Its function is as follows. Provides the signal sequence for the translocation of the precursor of protein E3/E2 to the host endoplasmic reticulum. Furin-cleaved E3 remains associated with spike glycoprotein E1 and mediates pH protection of the latter during the transport via the secretory pathway. After virion release from the host cell, the assembly protein E3 is gradually released in the extracellular space. Functionally, plays a role in viral attachment to target host cell, by binding to the cell receptor MXRA8. Synthesized as a p62 precursor which is processed by furin at the cell membrane just before virion budding, giving rise to E2-E1 heterodimer. The p62-E1 heterodimer is stable, whereas E2-E1 is unstable and dissociate at low pH. p62 is processed at the last step, presumably to avoid E1 fusion activation before its final export to cell surface. E2 C-terminus contains a transitory transmembrane that would be disrupted by palmitoylation, resulting in reorientation of the C-terminal tail from lumenal to cytoplasmic side. This step is critical since E2 C-terminus is involved in budding by interacting with capsid proteins. This release of E2 C-terminus in cytoplasm occurs lately in protein export, and precludes premature assembly of particles at the endoplasmic reticulum membrane. Acts as a viroporin that participates in virus glycoprotein processing and transport to the plasma membrane, cell permeabilization and budding of viral particles. The cation channel is permeable to Na(+)&gt;K(+)&gt;Ca(2+) in vitro. Disrupts the calcium homeostasis of the cell, probably at the endoplasmic reticulum level. This leads to cytoplasmic calcium elevation. Because of its lipophilic properties, the 6K protein is postulated to influence the selection of lipids that interact with the transmembrane domains of the glycoproteins, which, in turn, affects the deformability of the bilayer required for the extreme curvature that occurs as budding proceeds. Present in low amount in virions, about 3% compared to viral glycoproteins. In terms of biological role, class II viral fusion protein. Fusion activity is inactive as long as E1 is bound to E2 in mature virion. After virus attachment to target cell via host MXRA8 and endocytosis, acidification of the endosome induce dissociation of E1/E2 heterodimer and concomitant trimerization of the E1 subunits. This E1 trimer is fusion active, and promotes release of viral nucleocapsid in cytoplasm after endosome and viral membrane fusion. Efficient fusion requires the presence of cholesterol and sphingolipid in the target membrane. This is Structural polyprotein from Anopheles amictus (Common banded mosquito).